We begin with the raw amino-acid sequence, 157 residues long: Transcriptional repressor NrdR (157 aa).

The segment at Cys3 to Cys34 is a zinc-finger region. The 91-residue stretch at Leu46–Asp136 folds into the ATP-cone domain.

This sequence belongs to the NrdR family. It depends on Zn(2+) as a cofactor.

Negatively regulates transcription of bacterial ribonucleotide reductase nrd genes and operons by binding to NrdR-boxes. This chain is Transcriptional repressor NrdR, found in Clavibacter michiganensis subsp. michiganensis (strain NCPPB 382).